The primary structure comprises 335 residues: Tetraacyldisaccharide 4'-kinase (335 aa).

Residue 51–58 (HVGGAGKT) coordinates ATP.

This sequence belongs to the LpxK family.

It catalyses the reaction a lipid A disaccharide + ATP = a lipid IVA + ADP + H(+). The protein operates within glycolipid biosynthesis; lipid IV(A) biosynthesis; lipid IV(A) from (3R)-3-hydroxytetradecanoyl-[acyl-carrier-protein] and UDP-N-acetyl-alpha-D-glucosamine: step 6/6. Transfers the gamma-phosphate of ATP to the 4'-position of a tetraacyldisaccharide 1-phosphate intermediate (termed DS-1-P) to form tetraacyldisaccharide 1,4'-bis-phosphate (lipid IVA). This Bradyrhizobium sp. (strain ORS 278) protein is Tetraacyldisaccharide 4'-kinase.